Here is a 424-residue protein sequence, read N- to C-terminus: Glutamyl-tRNA(Gln) amidotransferase subunit D (424 aa).

The disordered stretch occupies residues 58–79 (NTNGGLNGGKEHKTAGEEVQKS). The segment covering 66–78 (GKEHKTAGEEVQK) has biased composition (basic and acidic residues). An Asparaginase/glutaminase domain is found at 84–406 (PKVAILSTGG…LGQTDEFNEA (323 aa)). Active-site residues include Thr94, Thr170, Asp171, and Lys247.

Belongs to the asparaginase 1 family. GatD subfamily. In terms of assembly, heterodimer of GatD and GatE.

The catalysed reaction is L-glutamyl-tRNA(Gln) + L-glutamine + ATP + H2O = L-glutaminyl-tRNA(Gln) + L-glutamate + ADP + phosphate + H(+). Allows the formation of correctly charged Gln-tRNA(Gln) through the transamidation of misacylated Glu-tRNA(Gln) in organisms which lack glutaminyl-tRNA synthetase. The reaction takes place in the presence of glutamine and ATP through an activated gamma-phospho-Glu-tRNA(Gln). The GatDE system is specific for glutamate and does not act on aspartate. This Methanosarcina barkeri (strain Fusaro / DSM 804) protein is Glutamyl-tRNA(Gln) amidotransferase subunit D.